The primary structure comprises 147 residues: Elongation factor Tu (147 aa).

This sequence belongs to the GTP-binding elongation factor family. EF-Tu/EF-1A subfamily. Monomer.

Its subcellular location is the cytoplasm. In terms of biological role, this protein promotes the GTP-dependent binding of aminoacyl-tRNA to the A-site of ribosomes during protein biosynthesis. The polypeptide is Elongation factor Tu (tuf) (Fructilactobacillus sanfranciscensis (Lactobacillus sanfranciscensis)).